A 619-amino-acid polypeptide reads, in one-letter code: Genetic interactor of prohibitins 3, mitochondrial (619 aa).

Residues 1-55 (MLKAQIQTGLQLLQRAAVSHMRPSSCTSMLMRMRVHLAPRALQSQRSLSSSEFSP) constitute a mitochondrion transit peptide. A CP-type G domain is found at 162–372 (VAAVSDVMHS…IYDVPGFSSA (211 aa)).

The protein belongs to the TRAFAC class YlqF/YawG GTPase family. GEP3 subfamily.

It is found in the mitochondrion. In terms of biological role, may be involved in the mitochondrial lipid metabolism. The sequence is that of Genetic interactor of prohibitins 3, mitochondrial (GEP3) from Clavispora lusitaniae (strain ATCC 42720) (Yeast).